A 286-amino-acid chain; its full sequence is ATP synthase gamma chain (286 aa).

This sequence belongs to the ATPase gamma chain family. As to quaternary structure, F-type ATPases have 2 components, CF(1) - the catalytic core - and CF(0) - the membrane proton channel. CF(1) has five subunits: alpha(3), beta(3), gamma(1), delta(1), epsilon(1). CF(0) has three main subunits: a, b and c.

Its subcellular location is the cell membrane. Functionally, produces ATP from ADP in the presence of a proton gradient across the membrane. The gamma chain is believed to be important in regulating ATPase activity and the flow of protons through the CF(0) complex. This chain is ATP synthase gamma chain, found in Bacillus cereus (strain G9842).